The following is a 271-amino-acid chain: Phosphatidylglycerol--prolipoprotein diacylglyceryl transferase (271 aa).

3 helical membrane passes run 17-37, 63-83, and 95-115; these read LAIH…FFLA, ILFL…CLFY, and IFAV…VLVS. Arg-146 contributes to the a 1,2-diacyl-sn-glycero-3-phospho-(1'-sn-glycerol) binding site. The next 3 helical transmembrane spans lie at 182–202, 209–229, and 243–263; these read SQVY…WLYA, GQVS…AEFF, and MSMG…LWIW.

The protein belongs to the Lgt family.

It localises to the cell inner membrane. The enzyme catalyses L-cysteinyl-[prolipoprotein] + a 1,2-diacyl-sn-glycero-3-phospho-(1'-sn-glycerol) = an S-1,2-diacyl-sn-glyceryl-L-cysteinyl-[prolipoprotein] + sn-glycerol 1-phosphate + H(+). It functions in the pathway protein modification; lipoprotein biosynthesis (diacylglyceryl transfer). Catalyzes the transfer of the diacylglyceryl group from phosphatidylglycerol to the sulfhydryl group of the N-terminal cysteine of a prolipoprotein, the first step in the formation of mature lipoproteins. This chain is Phosphatidylglycerol--prolipoprotein diacylglyceryl transferase, found in Polaromonas naphthalenivorans (strain CJ2).